The primary structure comprises 143 residues: 3-hydroxyacyl-[acyl-carrier-protein] dehydratase FabZ (143 aa).

Residue His49 is part of the active site.

The protein belongs to the thioester dehydratase family. FabZ subfamily.

The protein resides in the cytoplasm. The enzyme catalyses a (3R)-hydroxyacyl-[ACP] = a (2E)-enoyl-[ACP] + H2O. Its function is as follows. Involved in unsaturated fatty acids biosynthesis. Catalyzes the dehydration of short chain beta-hydroxyacyl-ACPs and long chain saturated and unsaturated beta-hydroxyacyl-ACPs. In Wolbachia pipientis subsp. Culex pipiens (strain wPip), this protein is 3-hydroxyacyl-[acyl-carrier-protein] dehydratase FabZ.